The following is a 155-amino-acid chain: Transcriptional repressor NrdR (155 aa).

Residues 3 to 34 fold into a zinc finger; sequence CPYCQNADTRVVDSRLIGEGEQVRRRRQCPSC. The region spanning 49 to 139 is the ATP-cone domain; the sequence is PRVVKSDGRR…VYRRFEDVGA (91 aa).

Belongs to the NrdR family. Zn(2+) serves as cofactor.

Negatively regulates transcription of bacterial ribonucleotide reductase nrd genes and operons by binding to NrdR-boxes. In Halorhodospira halophila (strain DSM 244 / SL1) (Ectothiorhodospira halophila (strain DSM 244 / SL1)), this protein is Transcriptional repressor NrdR.